The following is a 1137-amino-acid chain: Isoleucine--tRNA ligase (1137 aa).

The short motif at 50 to 60 (PSANGMPGIHH) is the 'HIGH' region element. Positions 688–692 (KMSKR) match the 'KMSKS' region motif. K691 serves as a coordination point for ATP.

This sequence belongs to the class-I aminoacyl-tRNA synthetase family. IleS type 2 subfamily. In terms of assembly, monomer. It depends on Zn(2+) as a cofactor.

It localises to the cytoplasm. It catalyses the reaction tRNA(Ile) + L-isoleucine + ATP = L-isoleucyl-tRNA(Ile) + AMP + diphosphate. In terms of biological role, catalyzes the attachment of isoleucine to tRNA(Ile). As IleRS can inadvertently accommodate and process structurally similar amino acids such as valine, to avoid such errors it has two additional distinct tRNA(Ile)-dependent editing activities. One activity is designated as 'pretransfer' editing and involves the hydrolysis of activated Val-AMP. The other activity is designated 'posttransfer' editing and involves deacylation of mischarged Val-tRNA(Ile). The polypeptide is Isoleucine--tRNA ligase (Porphyromonas gingivalis (strain ATCC BAA-308 / W83)).